A 350-amino-acid chain; its full sequence is MSKNKLSKGQQRRVNANHQRRLKTSVEKADYDDNLFGEPAEGIVISRFGMHADVESADGEVHRCNIRRTIRSLVTGDRVVWRPGKAAAEGVNVKGIVEAVHERTSVLTRPDFYDGVKPIAANIDQIVIVSAILPELSLNIIDRYLVGCETLQVEPLIVLNKIDLLDDEGMDFVNEQMDIYRNIGYRVLMVSSHTQDGLKPLEEALTGRISIFAGQSGVGKSSLLNALLGLQNEILTNDVSNVSGLGQHTTTAARLYHFPHGGDVIDSPGVREFGLWHLEPEQITRGFVEFHDYLGHCKYRDCKHDADPGCAIREAVENGAIAETRFENYHRILESMAQVKTRKNFSDTDD.

Residues 1–17 (MSKNKLSKGQQRRVNAN) show a composition bias toward polar residues. Residues 1–24 (MSKNKLSKGQQRRVNANHQRRLKT) form a disordered region. Residues 104–273 (TSVLTRPDFY…VIDSPGVREF (170 aa)) enclose the CP-type G domain. GTP contacts are provided by residues 160–163 (NKID) and 214–222 (GQSGVGKSS). The Zn(2+) site is built by Cys-297, Cys-302, His-304, and Cys-310.

This sequence belongs to the TRAFAC class YlqF/YawG GTPase family. RsgA subfamily. As to quaternary structure, monomer. Associates with 30S ribosomal subunit, binds 16S rRNA. Requires Zn(2+) as cofactor.

It localises to the cytoplasm. One of several proteins that assist in the late maturation steps of the functional core of the 30S ribosomal subunit. Helps release RbfA from mature subunits. May play a role in the assembly of ribosomal proteins into the subunit. Circularly permuted GTPase that catalyzes slow GTP hydrolysis, GTPase activity is stimulated by the 30S ribosomal subunit. The polypeptide is Small ribosomal subunit biogenesis GTPase RsgA (Salmonella schwarzengrund (strain CVM19633)).